Here is a 411-residue protein sequence, read N- to C-terminus: Protein phosphatase 1 regulatory subunit 36 (411 aa).

As to quaternary structure, interacts with PPP1CA.

Its function is as follows. Inhibits phosphatase activity of protein phosphatase 1 (PP1) complexes. The chain is Protein phosphatase 1 regulatory subunit 36 (Ppp1r36) from Rattus norvegicus (Rat).